A 591-amino-acid polypeptide reads, in one-letter code: Guanylate-binding protein 2 (591 aa).

Positions methionine 1–cysteine 309 are GTPase domain (Globular). In terms of domain architecture, GB1/RHD3-type G spans threonine 35–asparagine 276. Residues glycine 45–serine 52, arginine 181–aspartate 182, and leucine 245 contribute to the GTP site. Cysteine 588 is subject to Cysteine methyl ester. A lipid anchor (S-geranylgeranyl cysteine) is attached at cysteine 588. Residues asparagine 589–leucine 591 constitute a propeptide, removed in mature form.

This sequence belongs to the TRAFAC class dynamin-like GTPase superfamily. GB1/RHD3 GTPase family. GB1 subfamily. As to quaternary structure, homodimer; homodimerization occurs upon GTP-binding and is required for the association with membranous structures. Heterodimer with other family members, including GBP1, GBP3, GBP4 and GBP5. Post-translationally, (Microbial infection) Ubiquitinated by S.flexneri IpaH9.8, leading to its degradation by the proteasome, thereby preventing its ability to promote host defense against bacterial infection. Isoprenylation is required for proper subcellular location.

The protein localises to the cytoplasmic vesicle membrane. Its subcellular location is the golgi apparatus membrane. The protein resides in the cytoplasm. It is found in the perinuclear region. The catalysed reaction is GTP + H2O = GDP + phosphate + H(+). Interferon (IFN)-inducible GTPase that plays important roles in innate immunity against a diverse range of bacterial, viral and protozoan pathogens. Hydrolyzes GTP to GMP in 2 consecutive cleavage reactions, but the major reaction product is GDP. Following infection, recruited to the pathogen-containing vacuoles or vacuole-escaped bacteria and acts as a positive regulator of inflammasome assembly by promoting the release of inflammasome ligands from bacteria. Acts by promoting lysis of pathogen-containing vacuoles, releasing pathogens into the cytosol. Following pathogen release in the cytosol, promotes recruitment of proteins that mediate bacterial cytolysis: this liberates ligands that are detected by inflammasomes, such as lipopolysaccharide (LPS) that activates the non-canonical CASP4/CASP11 inflammasome or double-stranded DNA (dsDNA) that activates the AIM2 inflammasome. Confers protection to the protozoan pathogen Toxoplasma gondii. Independently of its GTPase activity, acts as an inhibitor of various viruses infectivity, such as HIV-1, Zika and influenza A viruses, by inhibiting FURIN-mediated maturation of viral envelope proteins. This chain is Guanylate-binding protein 2, found in Homo sapiens (Human).